The chain runs to 118 residues: Large ribosomal subunit protein bL20 (118 aa).

This sequence belongs to the bacterial ribosomal protein bL20 family.

Its function is as follows. Binds directly to 23S ribosomal RNA and is necessary for the in vitro assembly process of the 50S ribosomal subunit. It is not involved in the protein synthesizing functions of that subunit. The protein is Large ribosomal subunit protein bL20 of Pseudomonas fluorescens (strain SBW25).